The chain runs to 404 residues: G1/S-specific cyclin-E2 (404 aa).

Residues 1-45 form a disordered region; the sequence is MSRRSSRLQAKQQPQASQTDSPQEAQIIQAKKRKTAQDVKKRKEE. Positions 7–26 are enriched in polar residues; the sequence is RLQAKQQPQASQTDSPQEAQ. At Ser-21 the chain carries Phosphoserine. A compositionally biased stretch (basic and acidic residues) spans 35-45; it reads TAQDVKKRKEE. Lys-348 bears the N6-lactoyllysine mark. Ser-383 is modified (phosphoserine). Thr-392 is modified (phosphothreonine).

Belongs to the cyclin family. Cyclin E subfamily. As to quaternary structure, interacts with the CDK2 (in vivo) and CDK3 (in vitro) protein kinases to form a serine/threonine kinase holoenzyme complex. The cyclin subunit imparts substrate specificity to the complex. Post-translationally, phosphorylation by CDK2 triggers its release from CDK2 and degradation via the ubiquitin proteasome pathway. In terms of processing, lactylated at Lys-348. Delactylated by SIRT3.

Its subcellular location is the nucleus. Functionally, essential for the control of the cell cycle at the late G1 and early S phase. This chain is G1/S-specific cyclin-E2 (CCNE2), found in Bos taurus (Bovine).